Consider the following 303-residue polypeptide: Methionyl-tRNA formyltransferase (303 aa).

108 to 111 (SDLP) contributes to the (6S)-5,6,7,8-tetrahydrofolate binding site.

This sequence belongs to the Fmt family.

It carries out the reaction L-methionyl-tRNA(fMet) + (6R)-10-formyltetrahydrofolate = N-formyl-L-methionyl-tRNA(fMet) + (6S)-5,6,7,8-tetrahydrofolate + H(+). Functionally, attaches a formyl group to the free amino group of methionyl-tRNA(fMet). The formyl group appears to play a dual role in the initiator identity of N-formylmethionyl-tRNA by promoting its recognition by IF2 and preventing the misappropriation of this tRNA by the elongation apparatus. The sequence is that of Methionyl-tRNA formyltransferase from Rickettsia typhi (strain ATCC VR-144 / Wilmington).